We begin with the raw amino-acid sequence, 86 residues long: YcgL domain-containing protein XOO0428 (86 aa).

Residues 1–83 (MHAYVYKSQR…PKTRVLAGEC (83 aa)) form the YcgL domain.

The sequence is that of YcgL domain-containing protein XOO0428 from Xanthomonas oryzae pv. oryzae (strain MAFF 311018).